Consider the following 209-residue polypeptide: FMN-dependent NADH:quinone oxidoreductase (209 aa).

FMN contacts are provided by residues S18, 102–105 (MYNF), and 146–149 (SRGG).

It belongs to the azoreductase type 1 family. In terms of assembly, homodimer. FMN is required as a cofactor.

The enzyme catalyses 2 a quinone + NADH + H(+) = 2 a 1,4-benzosemiquinone + NAD(+). The catalysed reaction is N,N-dimethyl-1,4-phenylenediamine + anthranilate + 2 NAD(+) = 2-(4-dimethylaminophenyl)diazenylbenzoate + 2 NADH + 2 H(+). Quinone reductase that provides resistance to thiol-specific stress caused by electrophilic quinones. Functionally, also exhibits azoreductase activity. Catalyzes the reductive cleavage of the azo bond in aromatic azo compounds to the corresponding amines. This chain is FMN-dependent NADH:quinone oxidoreductase, found in Saccharophagus degradans (strain 2-40 / ATCC 43961 / DSM 17024).